A 137-amino-acid polypeptide reads, in one-letter code: MSFMKEFREFAMRGNVVDLAVGVIIGAAFGRIVSSLVADIIMPPLGLLLGGVDFKQFHFVLRAAEGTIPAVVMNYGTFIQSIFDFVIVALAIFSAVKLMNKLRREKAEEEPATPPAPTTEEILLAEIRDLLKAQHTK.

2 helical membrane passes run 10-30 (FAMRGNVVDLAVGVIIGAAFG) and 76-96 (GTFIQSIFDFVIVALAIFSAV).

This sequence belongs to the MscL family. As to quaternary structure, homopentamer.

Its subcellular location is the cell inner membrane. In terms of biological role, channel that opens in response to stretch forces in the membrane lipid bilayer. May participate in the regulation of osmotic pressure changes within the cell. The protein is Large-conductance mechanosensitive channel of Yersinia pseudotuberculosis serotype O:1b (strain IP 31758).